The following is a 404-amino-acid chain: Homocysteine-responsive endoplasmic reticulum-resident ubiquitin-like domain member 2 protein (404 aa).

The region spanning 10–89 is the Ubiquitin-like domain; that stretch reads VTLIIKAPNQ…HMVHLVCASR (80 aa). The segment at 86 to 153 is disordered; it reads CASRSPPSSP…TLSQAQTDPA (68 aa). Composition is skewed to low complexity over residues 88 to 97 and 109 to 126; these read SRSPPSSPKS and SSTSSNSDHSDSTTPSPS. Over residues 127–153 the composition is skewed to polar residues; it reads QESLSLVTGSSEGLRQRTLSQAQTDPA. Residues 301-321 traverse the membrane as a helical segment; that stretch reads FIMVMGAMLLVYLHQAGWFPF.

Its subcellular location is the membrane. In terms of biological role, could be involved in the unfolded protein response (UPR) pathway. This Mus musculus (Mouse) protein is Homocysteine-responsive endoplasmic reticulum-resident ubiquitin-like domain member 2 protein (Herpud2).